Reading from the N-terminus, the 447-residue chain is Acyl-CoA (8-3)-desaturase (447 aa).

M1 is subject to N-acetylmethionine. The Cytoplasmic segment spans residues M1–R124. One can recognise a Cytochrome b5 heme-binding domain in the interval T19–A97. A helical transmembrane segment spans residues M125–L145. Topologically, residues D146–L160 are lumenal. A helical membrane pass occupies residues V161–L180. Over Q181–Y268 the chain is Cytoplasmic. Residues H182 to H186 carry the Histidine box-1 motif. The short motif at H219–H223 is the Histidine box-2 element. Residues F269–F289 traverse the membrane as a helical segment. Topologically, residues V290–R308 are lumenal. Residues I309–V329 form a helical membrane-spanning segment. At R330–Q447 the chain is on the cytoplasmic side. The Histidine box-3 signature appears at Q385–H389.

It belongs to the fatty acid desaturase type 1 family. As to expression, highly expressed in the adrenal gland, liver, brain, and testis, tissues where lipogenesis and steroidogenesis are active. Expressed in colonic mucosa.

It is found in the endoplasmic reticulum membrane. It localises to the mitochondrion. It carries out the reaction (8Z,11Z,14Z)-eicosatrienoyl-CoA + 2 Fe(II)-[cytochrome b5] + O2 + 2 H(+) = (5Z,8Z,11Z,14Z)-eicosatetraenoyl-CoA + 2 Fe(III)-[cytochrome b5] + 2 H2O. The enzyme catalyses (8Z,11Z,14Z,17Z)-eicosatetraenoyl-CoA + 2 Fe(II)-[cytochrome b5] + O2 + 2 H(+) = (5Z,8Z,11Z,14Z,17Z)-eicosapentaenoyl-CoA + 2 Fe(III)-[cytochrome b5] + 2 H2O. It catalyses the reaction (11E)-octadecenoyl-CoA + 2 Fe(II)-[cytochrome b5] + O2 + 2 H(+) = (5Z,11E)-octadecadienoyl-CoA + 2 Fe(III)-[cytochrome b5] + 2 H2O. It participates in lipid metabolism; polyunsaturated fatty acid biosynthesis. In terms of biological role, acts as a front-end fatty acyl-coenzyme A (CoA) desaturase that introduces a cis double bond at carbon 5 located between a preexisting double bond and the carboxyl end of the fatty acyl chain. Involved in biosynthesis of highly unsaturated fatty acids (HUFA) from the essential polyunsaturated fatty acids (PUFA) linoleic acid (LA) (18:2n-6) and alpha-linolenic acid (ALA) (18:3n-3) precursors. Specifically, desaturates dihomo-gamma-linoleoate (DGLA) (20:3n-6) and eicosatetraenoate (ETA) (20:4n-3) to generate arachidonate (AA) (20:4n-6) and eicosapentaenoate (EPA) (20:5n-3), respectively. As a rate limiting enzyme for DGLA (20:3n-6) and AA (20:4n-6)-derived eicosanoid biosynthesis, controls the metabolism of inflammatory lipids like prostaglandin E2, critical for efficient acute inflammatory response and maintenance of epithelium homeostasis. Contributes to membrane phospholipid biosynthesis by providing AA (20:4n-6) as a major acyl chain esterified into phospholipids. In particular, regulates phosphatidylinositol-4,5-bisphosphate levels, modulating inflammatory cytokine production in T-cells. Also desaturates (11E)-octadecenoate (trans-vaccenoate)(18:1n-9), a metabolite in the biohydrogenation pathway of LA (18:2n-6). The chain is Acyl-CoA (8-3)-desaturase from Mus musculus (Mouse).